Reading from the N-terminus, the 216-residue chain is CsgBAC operon transcriptional regulatory protein (216 aa).

Positions 149–214 constitute an HTH luxR-type domain; that stretch reads NSTESALLTH…QAVSWANDNL (66 aa). The segment at residues 173–192 is a DNA-binding region (H-T-H motif); that stretch reads NNEIARSLFISENTVKTHLY.

The protein localises to the cell inner membrane. Functionally, the master regulator for adhesive curli fimbriae expression; necessary for transcription of the csgBAC/ymdA operon. Plays a positive role in biofilm formation. May have the capability to respond to starvation and/or high cell density by activating csgBA transcription. Low-level constitutive expression confers an adherent curli fimbriae-expressing phenotype, up-regulates 10 genes and down-regulates 14 others. The polypeptide is CsgBAC operon transcriptional regulatory protein (csgD) (Escherichia coli (strain K12)).